We begin with the raw amino-acid sequence, 427 residues long: Serine/threonine-protein kinase ssn3 (427 aa).

One can recognise a Protein kinase domain in the interval tyrosine 40–phenylalanine 369. ATP is bound by residues isoleucine 46 to valine 54 and lysine 70. Residue aspartate 172 is the Proton acceptor of the active site. Basic and acidic residues predominate over residues arginine 390–isoleucine 399. The interval arginine 390 to glutamate 427 is disordered.

This sequence belongs to the protein kinase superfamily. CMGC Ser/Thr protein kinase family. CDC2/CDKX subfamily. In terms of assembly, component of the srb8-11 complex, a regulatory module of the Mediator complex. It depends on Mg(2+) as a cofactor.

It is found in the nucleus. The catalysed reaction is L-seryl-[protein] + ATP = O-phospho-L-seryl-[protein] + ADP + H(+). It catalyses the reaction L-threonyl-[protein] + ATP = O-phospho-L-threonyl-[protein] + ADP + H(+). It carries out the reaction [DNA-directed RNA polymerase] + ATP = phospho-[DNA-directed RNA polymerase] + ADP + H(+). Its function is as follows. Component of the srb8-11 complex. The srb8-11 complex is a regulatory module of the Mediator complex which is itself involved in regulation of basal and activated RNA polymerase II-dependent transcription. The srb8-11 complex may be involved in the transcriptional repression of a subset of genes regulated by Mediator. It may inhibit the association of the Mediator complex with RNA polymerase II to form the holoenzyme complex. The srb8-11 complex phosphorylates the C-terminal domain (CTD) of the largest subunit of RNA polymerase II. The chain is Serine/threonine-protein kinase ssn3 (ssn3) from Aspergillus niger (strain ATCC MYA-4892 / CBS 513.88 / FGSC A1513).